The following is a 379-amino-acid chain: Cytochrome b (379 aa).

The next 4 membrane-spanning stretches (helical) occupy residues 33–53 (FGSL…FLAM), 77–98 (WLIR…YLHI), 113–133 (WNIG…GYVL), and 178–198 (FFAF…IHLL). His-83 and His-97 together coordinate heme b. Positions 182 and 196 each coordinate heme b. Position 201 (His-201) interacts with a ubiquinone. The next 4 helical transmembrane spans lie at 226 to 246 (YKDL…ALFY), 288 to 308 (LGGV…PILH), 320 to 340 (ASQL…WIGG), and 347 to 367 (YIII…VLNP).

Belongs to the cytochrome b family. As to quaternary structure, the cytochrome bc1 complex contains 3 respiratory subunits (MT-CYB, CYC1 and UQCRFS1), 2 core proteins (UQCRC1 and UQCRC2) and probably 6 low-molecular weight proteins. Heme b is required as a cofactor.

The protein localises to the mitochondrion inner membrane. Component of the ubiquinol-cytochrome c reductase complex (complex III or cytochrome b-c1 complex) that is part of the mitochondrial respiratory chain. The b-c1 complex mediates electron transfer from ubiquinol to cytochrome c. Contributes to the generation of a proton gradient across the mitochondrial membrane that is then used for ATP synthesis. The polypeptide is Cytochrome b (mt-cyb) (Anguilla interioris (Highlands long-finned eel)).